Reading from the N-terminus, the 83-residue chain is Apolipoprotein C-I, acidic form (83 aa).

Residues methionine 1 to glycine 26 form the signal peptide.

Belongs to the apolipoprotein C1 family.

It localises to the secreted. Its function is as follows. Inhibitor of lipoprotein binding to the low density lipoprotein (LDL) receptor, LDL receptor-related protein, and very low density lipoprotein (VLDL) receptor. Associates with high density lipoproteins (HDL) and the triacylglycerol-rich lipoproteins in the plasma and makes up about 10% of the protein of the VLDL and 2% of that of HDL. Appears to interfere directly with fatty acid uptake and is also the major plasma inhibitor of cholesteryl ester transfer protein (CETP). Binds free fatty acids and reduces their intracellular esterification. Modulates the interaction of APOE with beta-migrating VLDL and inhibits binding of beta-VLDL to the LDL receptor-related protein. In Pongo abelii (Sumatran orangutan), this protein is Apolipoprotein C-I, acidic form (APOC1A).